Reading from the N-terminus, the 414-residue chain is Serine/threonine transporter SstT (414 aa).

Topologically, residues 2 to 15 are cytoplasmic; sequence TTQRSPGLFRRLAH. The chain crosses the membrane as a helical span at residues 16-36; it reads GSLVKQILVGLVLGILLAWIS. Over 37 to 45 the chain is Periplasmic; sequence KPAAEAVGL. A helical membrane pass occupies residues 46–66; that stretch reads LGTLFVGALKAVAPILVLMLV. Residues 67–83 are Cytoplasmic-facing; it reads MASIANHQHGQKTNIRP. Residues 84–104 form a helical membrane-spanning segment; sequence ILFLYLLGTFSAALAAVVFSF. Over 105–142 the chain is Periplasmic; sequence AFPSTLHLSSSAGDISPPSGIVEVMRGLVMSMVSNPID. Residues 143-163 form a helical membrane-spanning segment; the sequence is ALLKGNYIGILVWAIGLGFAL. At 164–179 the chain is on the cytoplasmic side; sequence RHGNETTKNLVNDLSN. Residues 180 to 200 traverse the membrane as a helical segment; it reads AVTFMVKLVIRFAPIGIFGLV. The Periplasmic segment spans residues 201-217; it reads SSTLATTGFSTLWGYAQ. The helical transmembrane segment at 218–238 threads the bilayer; that stretch reads LLVVLVGCMLLVALVVNPLLV. Residues 239 to 299 lie on the Cytoplasmic side of the membrane; that stretch reads WWKIRRNPFP…VSIPLGATIN (61 aa). A helical membrane pass occupies residues 300–320; the sequence is MAGAAITITVLTLAAVNTLGI. At 321–331 the chain is on the periplasmic side; it reads PVDLPTALLLS. The helical transmembrane segment at 332-352 threads the bilayer; that stretch reads VVASLCACGASGVAGGSLLLI. The Cytoplasmic portion of the chain corresponds to 353–414; sequence PLACNMFGIS…DRLANSALRN (62 aa).

The protein belongs to the dicarboxylate/amino acid:cation symporter (DAACS) (TC 2.A.23) family.

Its subcellular location is the cell inner membrane. The catalysed reaction is L-serine(in) + Na(+)(in) = L-serine(out) + Na(+)(out). It catalyses the reaction L-threonine(in) + Na(+)(in) = L-threonine(out) + Na(+)(out). Its function is as follows. Involved in the import of serine and threonine into the cell, with the concomitant import of sodium (symport system). The polypeptide is Serine/threonine transporter SstT (Shigella boydii serotype 4 (strain Sb227)).